The chain runs to 219 residues: UPF0502 protein Gura_3445 (219 aa).

The segment at 162-181 (AGEPDLPDDTPAPPPEPARQ) is disordered.

Belongs to the UPF0502 family.

The polypeptide is UPF0502 protein Gura_3445 (Geotalea uraniireducens (strain Rf4) (Geobacter uraniireducens)).